Here is a 421-residue protein sequence, read N- to C-terminus: Nuclear envelope integral membrane protein 2 (421 aa).

Positions 1-22 are cleaved as a signal peptide; it reads MPPGSWWLVLWLPPLATLPAGA. The next 5 membrane-spanning stretches (helical) occupy residues 147–167, 175–195, 206–226, 232–252, and 279–299; these read NVVDFRLFLVFATGIFLFFYA, VFYYSSGTVLGILMTLVFVLL, TFGALMIGCWFASVYVLCQLM, LWCGNRIYVLGYVLVVGLCSF, and LVLVYTGMAISQFAYAVMILL.

This sequence belongs to the NEMP family.

The protein resides in the nucleus inner membrane. The sequence is that of Nuclear envelope integral membrane protein 2 (Nemp2) from Rattus norvegicus (Rat).